The sequence spans 258 residues: Flagellin B3 (258 aa).

A propeptide spanning residues 1–8 (MRFLKKRG) is cleaved from the precursor.

The protein belongs to the archaeal flagellin family.

The protein localises to the archaeal flagellum. Its function is as follows. Flagellin is the subunit protein which polymerizes to form the filaments of archaeal flagella. The chain is Flagellin B3 (flaB3) from Thermococcus kodakarensis (strain ATCC BAA-918 / JCM 12380 / KOD1) (Pyrococcus kodakaraensis (strain KOD1)).